A 254-amino-acid polypeptide reads, in one-letter code: 4-hydroxy-tetrahydrodipicolinate reductase (254 aa).

Residues Gly8–Met13, Gly87–Thr89, and Ala111–Met114 contribute to the NAD(+) site. The active-site Proton donor/acceptor is the His143. Residue His144 participates in (S)-2,3,4,5-tetrahydrodipicolinate binding. The active-site Proton donor is the Lys147. Gly153–Thr154 serves as a coordination point for (S)-2,3,4,5-tetrahydrodipicolinate.

Belongs to the DapB family.

The protein localises to the cytoplasm. It catalyses the reaction (S)-2,3,4,5-tetrahydrodipicolinate + NAD(+) + H2O = (2S,4S)-4-hydroxy-2,3,4,5-tetrahydrodipicolinate + NADH + H(+). The catalysed reaction is (S)-2,3,4,5-tetrahydrodipicolinate + NADP(+) + H2O = (2S,4S)-4-hydroxy-2,3,4,5-tetrahydrodipicolinate + NADPH + H(+). Its pathway is amino-acid biosynthesis; L-lysine biosynthesis via DAP pathway; (S)-tetrahydrodipicolinate from L-aspartate: step 4/4. Functionally, catalyzes the conversion of 4-hydroxy-tetrahydrodipicolinate (HTPA) to tetrahydrodipicolinate. This chain is 4-hydroxy-tetrahydrodipicolinate reductase, found in Campylobacter curvus (strain 525.92).